The sequence spans 244 residues: Uracil phosphoribosyltransferase (244 aa).

GTP contacts are provided by residues lysine 59, arginine 68, and 102-105 (YSKI). Arginine 112 lines the 5-phospho-alpha-D-ribose 1-diphosphate pocket. Residue arginine 129 participates in GTP binding. Arginine 137 is a binding site for 5-phospho-alpha-D-ribose 1-diphosphate. GTP is bound at residue arginine 158. Residues aspartate 164 and 164-172 (DPMCATAGS) each bind 5-phospho-alpha-D-ribose 1-diphosphate. Residues isoleucine 229 and 234 to 236 (GDF) contribute to the uracil site. Residue aspartate 235 coordinates 5-phospho-alpha-D-ribose 1-diphosphate.

This sequence belongs to the UPRTase family. As to quaternary structure, monomer. Forms homodimers in presence of substrates and homotetramers in the presence of GTP. Requires Mg(2+) as cofactor.

It catalyses the reaction UMP + diphosphate = 5-phospho-alpha-D-ribose 1-diphosphate + uracil. It functions in the pathway pyrimidine metabolism; UMP biosynthesis via salvage pathway; UMP from uracil: step 1/1. With respect to regulation, allosterically activated by GTP. Binding of GTP leads to 5-time activation of the enzyme. Functionally, catalyzes the conversion of uracil and 5-phospho-alpha-D-ribose 1-diphosphate (PRPP) to UMP and diphosphate. In Toxoplasma gondii, this protein is Uracil phosphoribosyltransferase (uprt).